Reading from the N-terminus, the 208-residue chain is Putative 3-methyladenine DNA glycosylase (208 aa).

The segment at 1-20 (MGRAHTVSRGEDHPPIARSE) is disordered.

This sequence belongs to the DNA glycosylase MPG family.

The chain is Putative 3-methyladenine DNA glycosylase from Mesorhizobium japonicum (strain LMG 29417 / CECT 9101 / MAFF 303099) (Mesorhizobium loti (strain MAFF 303099)).